We begin with the raw amino-acid sequence, 80 residues long: Exodeoxyribonuclease 7 small subunit (80 aa).

This sequence belongs to the XseB family. As to quaternary structure, heterooligomer composed of large and small subunits.

It localises to the cytoplasm. The catalysed reaction is Exonucleolytic cleavage in either 5'- to 3'- or 3'- to 5'-direction to yield nucleoside 5'-phosphates.. Bidirectionally degrades single-stranded DNA into large acid-insoluble oligonucleotides, which are then degraded further into small acid-soluble oligonucleotides. This chain is Exodeoxyribonuclease 7 small subunit, found in Vibrio campbellii (strain ATCC BAA-1116).